A 183-amino-acid polypeptide reads, in one-letter code: Inner membrane-spanning protein YciB (183 aa).

The next 5 membrane-spanning stretches (helical) occupy residues 19–39, 53–73, 76–96, 121–141, and 151–171; these read LYGV…QLIV, IMGI…DLNF, WKVT…QFVF, LGWA…SYYF, and TFGF…YLYP.

It belongs to the YciB family.

It is found in the cell inner membrane. Plays a role in cell envelope biogenesis, maintenance of cell envelope integrity and membrane homeostasis. The sequence is that of Inner membrane-spanning protein YciB from Actinobacillus pleuropneumoniae serotype 3 (strain JL03).